Reading from the N-terminus, the 504-residue chain is ATP synthase subunit alpha, chloroplastic (504 aa).

G170 to T177 serves as a coordination point for ATP.

Belongs to the ATPase alpha/beta chains family. As to quaternary structure, F-type ATPases have 2 components, CF(1) - the catalytic core - and CF(0) - the membrane proton channel. CF(1) has five subunits: alpha(3), beta(3), gamma(1), delta(1), epsilon(1). CF(0) has four main subunits: a, b, b' and c.

It is found in the plastid. The protein resides in the chloroplast thylakoid membrane. The enzyme catalyses ATP + H2O + 4 H(+)(in) = ADP + phosphate + 5 H(+)(out). Produces ATP from ADP in the presence of a proton gradient across the membrane. The alpha chain is a regulatory subunit. The protein is ATP synthase subunit alpha, chloroplastic of Pyropia yezoensis (Susabi-nori).